We begin with the raw amino-acid sequence, 194 residues long: Peptidyl-tRNA hydrolase (194 aa).

A tRNA-binding site is contributed by Tyr-17. The Proton acceptor role is filled by His-22. Residues Tyr-68, Asn-70, and Asn-116 each coordinate tRNA.

Belongs to the PTH family. Monomer.

The protein localises to the cytoplasm. The catalysed reaction is an N-acyl-L-alpha-aminoacyl-tRNA + H2O = an N-acyl-L-amino acid + a tRNA + H(+). Functionally, hydrolyzes ribosome-free peptidyl-tRNAs (with 1 or more amino acids incorporated), which drop off the ribosome during protein synthesis, or as a result of ribosome stalling. In terms of biological role, catalyzes the release of premature peptidyl moieties from peptidyl-tRNA molecules trapped in stalled 50S ribosomal subunits, and thus maintains levels of free tRNAs and 50S ribosomes. In Marinomonas sp. (strain MWYL1), this protein is Peptidyl-tRNA hydrolase.